A 526-amino-acid chain; its full sequence is ATP synthase subunit alpha (526 aa).

171-178 contacts ATP; sequence GDRQTGKT.

The protein belongs to the ATPase alpha/beta chains family. F-type ATPases have 2 components, CF(1) - the catalytic core - and CF(0) - the membrane proton channel. CF(1) has five subunits: alpha(3), beta(3), gamma(1), delta(1), epsilon(1). CF(0) has four main subunits: a(1), b(1), b'(1) and c(9-12).

It is found in the cell inner membrane. It catalyses the reaction ATP + H2O + 4 H(+)(in) = ADP + phosphate + 5 H(+)(out). Its function is as follows. Produces ATP from ADP in the presence of a proton gradient across the membrane. The alpha chain is a regulatory subunit. The sequence is that of ATP synthase subunit alpha from Chlorobaculum tepidum (strain ATCC 49652 / DSM 12025 / NBRC 103806 / TLS) (Chlorobium tepidum).